The following is a 373-amino-acid chain: Maltose/maltodextrin import ATP-binding protein MalK (373 aa).

The 231-residue stretch at 4–234 (VTLKNVCKAY…PQNRFVAGFI (231 aa)) folds into the ABC transporter domain. 36–43 (GPSGCGKS) is an ATP binding site.

This sequence belongs to the ABC transporter superfamily. Maltooligosaccharide importer (TC 3.A.1.1.1) family. The complex is composed of two ATP-binding proteins (MalK), two transmembrane proteins (MalG and MalK) and a solute-binding protein (MalE).

The protein localises to the cell inner membrane. It catalyses the reaction D-maltose(out) + ATP + H2O = D-maltose(in) + ADP + phosphate + H(+). Functionally, part of the ABC transporter complex MalEFGK involved in maltose/maltodextrin import. Responsible for energy coupling to the transport system. The chain is Maltose/maltodextrin import ATP-binding protein MalK from Vibrio cholerae serotype O1 (strain ATCC 39315 / El Tor Inaba N16961).